The following is a 238-amino-acid chain: uncharacterized protein (238 aa).

The next 4 membrane-spanning stretches (helical) occupy residues 13 to 33 (TLFF…FGII), 40 to 60 (GSVG…LILG), 107 to 127 (VVLI…FCQV), and 140 to 160 (VISL…PMAF). 4Fe-4S ferredoxin-type domains are found at residues 178–208 (PFFQ…TEKL) and 204–233 (ITEK…FSYA). The [4Fe-4S] cluster site is built by Cys188, Cys191, Cys194, Cys198, Cys213, Cys216, Cys219, and Cys223.

The protein localises to the cell membrane. This is an uncharacterized protein from Methanocaldococcus jannaschii (strain ATCC 43067 / DSM 2661 / JAL-1 / JCM 10045 / NBRC 100440) (Methanococcus jannaschii).